A 152-amino-acid chain; its full sequence is Globin CTT-E/E' (152 aa).

The first 15 residues, 1-15 (MKFIILALCVAAASA), serve as a signal peptide directing secretion. The 137-residue stretch at 16-152 (LSGDQIGLVQ…AFFGAVFAKM (137 aa)) folds into the Globin domain. 2 residues coordinate heme b: H73 and H102.

This sequence belongs to the globin family.

This Chironomus thummi thummi (Midge) protein is Globin CTT-E/E' (CTT-E).